The chain runs to 180 residues: Adenine phosphoribosyltransferase (180 aa).

S2 is subject to N-acetylserine. 2 positions are modified to phosphoserine: S15 and S30. Position 60 is a phosphotyrosine (Y60). S66 carries the phosphoserine modification. K114 is modified (N6-acetyllysine). Residue T135 is modified to Phosphothreonine.

The protein belongs to the purine/pyrimidine phosphoribosyltransferase family. As to quaternary structure, homodimer.

It localises to the cytoplasm. The catalysed reaction is AMP + diphosphate = 5-phospho-alpha-D-ribose 1-diphosphate + adenine. Its pathway is purine metabolism; AMP biosynthesis via salvage pathway; AMP from adenine: step 1/1. In terms of biological role, catalyzes a salvage reaction resulting in the formation of AMP, that is energically less costly than de novo synthesis. This is Adenine phosphoribosyltransferase from Stochomys longicaudatus (Target rat).